We begin with the raw amino-acid sequence, 212 residues long: ATP-dependent Clp protease proteolytic subunit (212 aa).

The active-site Nucleophile is serine 114. Histidine 139 is an active-site residue.

It belongs to the peptidase S14 family. Fourteen ClpP subunits assemble into 2 heptameric rings which stack back to back to give a disk-like structure with a central cavity, resembling the structure of eukaryotic proteasomes.

It is found in the cytoplasm. It carries out the reaction Hydrolysis of proteins to small peptides in the presence of ATP and magnesium. alpha-casein is the usual test substrate. In the absence of ATP, only oligopeptides shorter than five residues are hydrolyzed (such as succinyl-Leu-Tyr-|-NHMec, and Leu-Tyr-Leu-|-Tyr-Trp, in which cleavage of the -Tyr-|-Leu- and -Tyr-|-Trp bonds also occurs).. Functionally, cleaves peptides in various proteins in a process that requires ATP hydrolysis. Has a chymotrypsin-like activity. Plays a major role in the degradation of misfolded proteins. This Azoarcus sp. (strain BH72) protein is ATP-dependent Clp protease proteolytic subunit.